We begin with the raw amino-acid sequence, 974 residues long: Villin-4 (974 aa).

Gelsolin-like repeat units follow at residues 29-79 (FIPT…DEAG), 150-190 (VHVK…QERA), 262-305 (GQAN…DDRK), 394-451 (LQVW…EERG), 532-572 (MQAI…TDQE), and 634-675 (LKVT…KNKL). The disordered stretch occupies residues 738-783 (VKNGGTPVADKPKRRTPASYGGRASVPDKSQQRSRSMSFSPDRVRV). 2 positions are modified to phosphoserine: Ser777 and Ser787. Disordered regions lie at residues 801-833 (NARN…APKS) and 845-930 (KIPP…PVSD). The segment covering 824–833 (SSKFAPAPKS) has biased composition (low complexity). Over residues 872-887 (NSKEQEEKKENDKEEG) the composition is skewed to basic and acidic residues. The segment covering 888-898 (SMSSRIESLTI) has biased composition (polar residues). Ser890 is subject to Phosphoserine. In terms of domain architecture, HP spans 909–974 (EEDLPAHPYD…NKFKMAVQLF (66 aa)). A compositionally biased stretch (basic and acidic residues) spans 912–921 (LPAHPYDRLK).

This sequence belongs to the villin/gelsolin family. Preferentially expressed in vegetative tissues. Detected in the whole seedling, hypocotyl, cotyledon, primary root, roots hair cells and trichomes. Expressed in flowers but not in the silique.

It localises to the cytoplasm. The protein localises to the cytoskeleton. Functionally, binds actin and actin filament bundles in a Ca(2+)-insensitive manner, but caps the barbed end of actin filaments and is able to sever them in a calcium-dependent manner. Involved in root hair growth through regulating actin organization in a Ca(2+)-dependent manner. The sequence is that of Villin-4 from Arabidopsis thaliana (Mouse-ear cress).